The following is a 189-amino-acid chain: Large ribosomal subunit protein uL5c (189 aa).

This sequence belongs to the universal ribosomal protein uL5 family. In terms of assembly, part of the 50S ribosomal subunit; contacts the 5S rRNA.

It is found in the plastid. It localises to the chloroplast. Binds 5S rRNA, forms part of the central protuberance of the 50S subunit. This chain is Large ribosomal subunit protein uL5c (rpl5), found in Chara vulgaris (Common stonewort).